The primary structure comprises 216 residues: ATP-dependent Clp protease proteolytic subunit (216 aa).

Ser-103 functions as the Nucleophile in the catalytic mechanism. His-128 is a catalytic residue. The tract at residues 197–216 is disordered; sequence RRPALPGDDAPRDVSEGPTP.

The protein belongs to the peptidase S14 family. In terms of assembly, fourteen ClpP subunits assemble into 2 heptameric rings which stack back to back to give a disk-like structure with a central cavity, resembling the structure of eukaryotic proteasomes.

The protein localises to the cytoplasm. The enzyme catalyses Hydrolysis of proteins to small peptides in the presence of ATP and magnesium. alpha-casein is the usual test substrate. In the absence of ATP, only oligopeptides shorter than five residues are hydrolyzed (such as succinyl-Leu-Tyr-|-NHMec, and Leu-Tyr-Leu-|-Tyr-Trp, in which cleavage of the -Tyr-|-Leu- and -Tyr-|-Trp bonds also occurs).. Its function is as follows. Cleaves peptides in various proteins in a process that requires ATP hydrolysis. Has a chymotrypsin-like activity. Plays a major role in the degradation of misfolded proteins. The chain is ATP-dependent Clp protease proteolytic subunit from Sphingopyxis alaskensis (strain DSM 13593 / LMG 18877 / RB2256) (Sphingomonas alaskensis).